Reading from the N-terminus, the 1327-residue chain is Myb-like protein O (1327 aa).

The span at 131–142 (NNNINTTNNNNK) shows a compositional bias: low complexity. Disordered stretches follow at residues 131–153 (NNNI…EESN), 263–390 (EEED…DESS), 504–668 (PPQQ…NHES), and 717–770 (KKKK…DNDD). A compositionally biased stretch (acidic residues) spans 263-283 (EEEDDEDYIPPEEEEDDDEDN). Positions 322–353 (YNNTANNINNNNIGDESDNNNNNNNNINNNSN) are enriched in low complexity. Over residues 356–374 (DDDDDDDDDNNDDDDDDND) the composition is skewed to acidic residues. Low complexity predominate over residues 511–532 (SSSSINSSNTMSSSSSSSSLSK). Over residues 533 to 542 (NKLKKKKKEE) the composition is skewed to basic residues. Over residues 543–554 (KRKEEKRKEEKR) the composition is skewed to basic and acidic residues. The span at 555–577 (KEKKRKKRQSITISKFKKNKKKT) shows a compositional bias: basic residues. Over residues 585–606 (SESDSSSDDSDDSDFYYSDIEE) the composition is skewed to acidic residues. The segment covering 607–619 (GGGGNGNGSGSGV) has biased composition (gly residues). Residues 624 to 633 (SDNEEGDSSS) show a composition bias toward acidic residues. Low complexity-rich tracts occupy residues 646-668 (HTNN…NHES) and 722-732 (QSSSSSSSSTI). Residues 754–770 (NDDEDDNNNNNEDDNDD) are compositionally biased toward acidic residues. An HTH myb-type domain is found at 897–953 (NVKLNQLKFTGGEDLLLLMGVKRFGTFNWRIIQKRYFPNKTDDQLFHRYKNLLSHSS). Positions 925-949 (WRIIQKRYFPNKTDDQLFHRYKNLL) form a DNA-binding region, H-T-H motif. Residues 959–1010 (KQYLNGAKFTKEEEEKLDGAIKIHGLKWDIISRDYLHWKEPAMLKKFYEKRE) enclose the Myb-like 1 domain. Composition is skewed to low complexity over residues 1061–1118 (NSTN…NENN) and 1144–1160 (PIIE…ETSP). Disordered stretches follow at residues 1061 to 1122 (NSTN…YEFG) and 1144 to 1168 (PIIE…PCPI). The 49-residue stretch at 1268 to 1316 (KWTREEDRIILITVKEKGTVDNEIWKSLSDTKIQDKTPDQIMYRYLQLL) folds into the Myb-like 2 domain.

The protein resides in the nucleus. This is Myb-like protein O (mybO) from Dictyostelium discoideum (Social amoeba).